A 150-amino-acid chain; its full sequence is Putative ribosome maturation factor RimP (150 aa).

This sequence belongs to the RimP family.

It localises to the cytoplasm. Its function is as follows. Required for maturation of 30S ribosomal subunits. The polypeptide is Putative ribosome maturation factor RimP (Mycobacterium leprae (strain TN)).